Reading from the N-terminus, the 256-residue chain is Enolase-phosphatase E1 (256 aa).

Mg(2+) contacts are provided by Asp-14 and Glu-16. Substrate-binding positions include 142–143 (SS) and Lys-176. Asp-201 provides a ligand contact to Mg(2+).

The protein belongs to the HAD-like hydrolase superfamily. MasA/MtnC family. As to quaternary structure, monomer. Mg(2+) serves as cofactor.

It localises to the cytoplasm. It is found in the nucleus. It catalyses the reaction 5-methylsulfanyl-2,3-dioxopentyl phosphate + H2O = 1,2-dihydroxy-5-(methylsulfanyl)pent-1-en-3-one + phosphate. The protein operates within amino-acid biosynthesis; L-methionine biosynthesis via salvage pathway; L-methionine from S-methyl-5-thio-alpha-D-ribose 1-phosphate: step 3/6. It functions in the pathway amino-acid biosynthesis; L-methionine biosynthesis via salvage pathway; L-methionine from S-methyl-5-thio-alpha-D-ribose 1-phosphate: step 4/6. Its function is as follows. Bifunctional enzyme that catalyzes the enolization of 2,3-diketo-5-methylthiopentyl-1-phosphate (DK-MTP-1-P) into the intermediate 2-hydroxy-3-keto-5-methylthiopentenyl-1-phosphate (HK-MTPenyl-1-P), which is then dephosphorylated to form the acireductone 1,2-dihydroxy-3-keto-5-methylthiopentene (DHK-MTPene). This chain is Enolase-phosphatase E1, found in Drosophila erecta (Fruit fly).